A 248-amino-acid polypeptide reads, in one-letter code: Coproheme decarboxylase (248 aa).

Residues Arg-130, Tyr-144, 144–148 (YPMDK), Lys-148, His-171, Gln-184, and Ser-222 each bind Fe-coproporphyrin III. Residue Tyr-144 is part of the active site.

The protein belongs to the ChdC family. Type 1 subfamily. Homopentamer. Requires Fe-coproporphyrin III as cofactor.

The enzyme catalyses Fe-coproporphyrin III + 2 H2O2 + 2 H(+) = heme b + 2 CO2 + 4 H2O. It carries out the reaction Fe-coproporphyrin III + H2O2 + H(+) = harderoheme III + CO2 + 2 H2O. The catalysed reaction is harderoheme III + H2O2 + H(+) = heme b + CO2 + 2 H2O. Its pathway is porphyrin-containing compound metabolism; protoheme biosynthesis. In terms of biological role, involved in coproporphyrin-dependent heme b biosynthesis. Catalyzes the decarboxylation of Fe-coproporphyrin III (coproheme) to heme b (protoheme IX), the last step of the pathway. The reaction occurs in a stepwise manner with a three-propionate harderoheme intermediate. This Geobacillus stearothermophilus (strain DSM 13240 / CIP 106956 / 10) protein is Coproheme decarboxylase.